The following is a 334-amino-acid chain: MSTKNFRVSDGDWICPDKKCGNVNFARRTSCNRCGREKTTEAKMMKAGGTEIGKTLAEKSRGLFSANDWQCKTCGNVNWARRSECNMCNTPKYAKLEERTGYGGGFNERENVEYIEREESDGEYDEFGRKKKKYRGKPVGPASILKEVEDKESEGEDEEDEDGDLSKYKLDEDEDEDDADLSKYNLDASEEEDTNKKKKSNRRSRSKSRSSHSRSSSRSSSHSSSRSRSRSHSRSSSSSRSRSRSSSREHSRSRGSKSRSSSRSYRGSSTPRKRSYSSSRSSSSPERSKKRSRSRSSSSGDRKKRRSRSRSPERRRRSSSGSSHSGSRTSSKKK.

2 consecutive RanBP2-type zinc fingers follow at residues 9-40 and 65-94; these read SDGDWICPDKKCGNVNFARRTSCNRCGREKTT and SANDWQCKTCGNVNWARRSECNMCNTPKYA. A disordered region spans residues 117–334; that stretch reads REESDGEYDE…SGSRTSSKKK (218 aa). The span at 150-163 shows a compositional bias: acidic residues; sequence DKESEGEDEEDEDG. The span at 196–212 shows a compositional bias: basic residues; that stretch reads KKKKSNRRSRSKSRSSH. Composition is skewed to low complexity over residues 213-224 and 258-285; these read SRSSSRSSSHSS and SRSSSRSYRGSSTPRKRSYSSSRSSSSP. The span at 302 to 318 shows a compositional bias: basic residues; that stretch reads RKKRRSRSRSPERRRRS. Low complexity predominate over residues 319-334; it reads SSGSSHSGSRTSSKKK.

Belongs to the ZRANB2 family.

The protein localises to the nucleus. Functionally, may regulate alternative splicing by interfering with constitutive 5'-splice site selection. This is Zinc finger Ran-binding domain-containing protein 2 from Gallus gallus (Chicken).